Reading from the N-terminus, the 2451-residue chain is Reducing polyketide synthase 8 (2451 aa).

Residues 12-434 (NEPIAIVGSS…GTNAHAILEA (423 aa)) form the Ketosynthase family 3 (KS3) domain. Catalysis depends on for beta-ketoacyl synthase activity residues C174, H313, and H354. A Malonyl-CoA:ACP transacylase (MAT) domain is found at 538 to 846 (VFTGQGAQWA…GPATETINNM (309 aa)). The interval 940 to 1085 (HQLLGSASTF…GFLRIELGAP (146 aa)) is N-terminal hotdog fold. In terms of domain architecture, PKS/mFAS DH spans 940–1254 (HQLLGSASTF…LLNLPGSLRS (315 aa)). The active-site Proton acceptor; for dehydratase activity is the H974. The C-terminal hotdog fold stretch occupies residues 1100 to 1254 (LIPLDVEELY…LLNLPGSLRS (155 aa)). D1160 functions as the Proton donor; for dehydratase activity in the catalytic mechanism. The methyltransfrase (MT) domain stretch occupies residues 1294–1590 (LVLFYCQKVL…QHFCSVMLSQ (297 aa)). One can recognise a Ketoreductase (KR) domain in the interval 2088-2266 (TYLLLGLAGD…PGCVVHIGGV (179 aa)). The Carrier domain occupies 2366–2451 (DACLDLLLGG…LAIWRKQVKA (86 aa)). Position 2404 is an O-(pantetheine 4'-phosphoryl)serine (S2404).

It depends on pantetheine 4'-phosphate as a cofactor.

It participates in secondary metabolite biosynthesis. Reducing polyketide synthase; part of the gene cluster that mediates the biosynthesis of fusamarins, isocoumarin derivatives that show moderate cytotoxicity with IC(50) values between 1 and 50 uM. The polyketide synthase FMN1 probably synthesizes two different polyketides, a tetra- and a pentaketide, containinga varying number of double bonds depending on the selective actions of the trans-enoyl reductase FMN2. Chain fusion will presumably be mediated by the KS domain before finally offloading is catalyzed by the alpha/beta hydrolase fold enzyme FMN3. The sequence is that of Reducing polyketide synthase 8 from Fusarium mangiferae (Mango malformation disease fungus).